The chain runs to 803 residues: Nucleoporin nup82 (803 aa).

In terms of assembly, component of the nuclear pore complex (NPC). NPC constitutes the exclusive means of nucleocytoplasmic transport. NPCs allow the passive diffusion of ions and small molecules and the active, nuclear transport receptor-mediated bidirectional transport of macromolecules such as proteins, RNAs, ribonucleoparticles (RNPs), and ribosomal subunits across the nuclear envelope.

The protein resides in the nucleus. It localises to the nuclear pore complex. The protein localises to the nucleus membrane. Functions as a component of the nuclear pore complex (NPC). NPC components, collectively referred to as nucleoporins (NUPs), can play the role of both NPC structural components and of docking or interaction partners for transiently associated nuclear transport factors. The protein is Nucleoporin nup82 of Schizosaccharomyces pombe (strain 972 / ATCC 24843) (Fission yeast).